The sequence spans 267 residues: N-acetylgalactosamine permease IIC component 1 (267 aa).

Topologically, residues 1–10 (MHEITLLQGL) are periplasmic. The PTS EIIC type-4 domain occupies 1–237 (MHEITLLQGL…VAVLGAGFAV (237 aa)). Residues 11-31 (SLAALVFVLGIDFWLEALFLF) traverse the membrane as a helical segment. The Cytoplasmic segment spans residues 32–33 (RP). Residues 34 to 54 (IIVCTLTGAILGDIQTGLITG) traverse the membrane as a helical segment. The Periplasmic portion of the chain corresponds to 55–66 (GLTELAFAGLTP). Residues 67 to 87 (AGGVQPPNPIMAGLMTTVIAW) form a helical membrane-spanning segment. At 88 to 94 (STGVDAK) the chain is on the cytoplasmic side. Residues 95–115 (TAIGLGLPFSLLMQYVILFFY) traverse the membrane as a helical segment. Residues 116–141 (SAFSLFMTKADKCAKEADTAAFSRLN) are Periplasmic-facing. The helical transmembrane segment at 142-162 (WTTMLIVASAYAVIAFLCTYL) threads the bilayer. Over 163-177 (AQGAMQALVKAMPAW) the chain is Cytoplasmic. Residues 178-198 (LTHGFEVAGGILPAVGFGLLL) form a helical membrane-spanning segment. Residues 199–209 (RVMFKAQYIPY) are Periplasmic-facing. A helical transmembrane segment spans residues 210 to 230 (LIAGFLFVCYIQVSNLLPVAV). Residues 231–267 (LGAGFAVYEFFNAKSRQQAQPQPVASKNEEEDYSNGI) lie on the Cytoplasmic side of the membrane.

Its subcellular location is the cell inner membrane. Functionally, the phosphoenolpyruvate-dependent sugar phosphotransferase system (PTS), a major carbohydrate active -transport system, catalyzes the phosphorylation of incoming sugar substrates concomitant with their translocation across the cell membrane. This system is involved in N-acetylgalactosamine transport. This Escherichia coli (strain K12) protein is N-acetylgalactosamine permease IIC component 1 (agaC).